The sequence spans 347 residues: Quinolinate synthase (347 aa).

The iminosuccinate site is built by histidine 47 and serine 68. Cysteine 113 is a [4Fe-4S] cluster binding site. Residues 139–141 and serine 156 contribute to the iminosuccinate site; that span reads YAN. Cysteine 200 provides a ligand contact to [4Fe-4S] cluster. Iminosuccinate contacts are provided by residues 226–228 and threonine 243; that span reads HPE. Cysteine 297 provides a ligand contact to [4Fe-4S] cluster.

Belongs to the quinolinate synthase family. Type 1 subfamily. [4Fe-4S] cluster serves as cofactor.

Its subcellular location is the cytoplasm. The catalysed reaction is iminosuccinate + dihydroxyacetone phosphate = quinolinate + phosphate + 2 H2O + H(+). Its pathway is cofactor biosynthesis; NAD(+) biosynthesis; quinolinate from iminoaspartate: step 1/1. In terms of biological role, catalyzes the condensation of iminoaspartate with dihydroxyacetone phosphate to form quinolinate. This is Quinolinate synthase from Escherichia coli O127:H6 (strain E2348/69 / EPEC).